The chain runs to 243 residues: Adenosylcobinamide-GDP ribazoletransferase (243 aa).

A run of 5 helical transmembrane segments spans residues leucine 31–leucine 51, alanine 61–alanine 81, isoleucine 109–leucine 129, glycine 134–threonine 154, and leucine 188–leucine 208.

Belongs to the CobS family. Mg(2+) is required as a cofactor.

Its subcellular location is the cell inner membrane. The enzyme catalyses alpha-ribazole + adenosylcob(III)inamide-GDP = adenosylcob(III)alamin + GMP + H(+). It carries out the reaction alpha-ribazole 5'-phosphate + adenosylcob(III)inamide-GDP = adenosylcob(III)alamin 5'-phosphate + GMP + H(+). Its pathway is cofactor biosynthesis; adenosylcobalamin biosynthesis; adenosylcobalamin from cob(II)yrinate a,c-diamide: step 7/7. Joins adenosylcobinamide-GDP and alpha-ribazole to generate adenosylcobalamin (Ado-cobalamin). Also synthesizes adenosylcobalamin 5'-phosphate from adenosylcobinamide-GDP and alpha-ribazole 5'-phosphate. The protein is Adenosylcobinamide-GDP ribazoletransferase of Ectopseudomonas mendocina (strain ymp) (Pseudomonas mendocina).